Reading from the N-terminus, the 294-residue chain is Ribosomal RNA small subunit methyltransferase H (294 aa).

S-adenosyl-L-methionine is bound by residues 31–33 (GGY), aspartate 49, phenylalanine 76, aspartate 97, and glutamine 104.

The protein belongs to the methyltransferase superfamily. RsmH family.

The protein localises to the cytoplasm. The enzyme catalyses cytidine(1402) in 16S rRNA + S-adenosyl-L-methionine = N(4)-methylcytidine(1402) in 16S rRNA + S-adenosyl-L-homocysteine + H(+). Functionally, specifically methylates the N4 position of cytidine in position 1402 (C1402) of 16S rRNA. This chain is Ribosomal RNA small subunit methyltransferase H, found in Wolbachia pipientis subsp. Culex pipiens (strain wPip).